A 340-amino-acid chain; its full sequence is Organic solute transporter subunit alpha (340 aa).

Residues 1–48 (MEPGRTQIKLDPRYTADLLEVLKTNYGIPSACFSQPPTAAQLLRALGP) are Extracellular-facing. The helical transmembrane segment at 49 to 69 (VELALTSILTLLALGSIAIFL) threads the bilayer. Residues 70-87 (EDAVYLYKNTLCPIKRRT) lie on the Cytoplasmic side of the membrane. The chain crosses the membrane as a helical span at residues 88–108 (LLWKSSAPTVVSVLCCFGLWI). Residues 109-118 (PRSLVLVEMT) are Extracellular-facing. Residues 119–139 (ITSFYAVCFYLLMLVMVEGFG) traverse the membrane as a helical segment. The Cytoplasmic segment spans residues 140–181 (GKEAVLRTLRDTPMMVHTGPCCCCCPCCPRLLLTRKKLQLLM). A helical membrane pass occupies residues 182-202 (LGPFQYAFLKITLTLVGLFLV). Residues 203–218 (PDGIYDPADISEGSTA) are Extracellular-facing. The helical transmembrane segment at 219–239 (LWINTFLGVSTLLALWTLGII) threads the bilayer. Residues 240 to 255 (SRQARLHLGEQNMGAK) are Cytoplasmic-facing. A helical transmembrane segment spans residues 256–276 (FALFQVLLILTALQPSIFSVL). The Extracellular portion of the chain corresponds to 277-294 (ANGGQIACSPPYSSKTRS). The chain crosses the membrane as a helical span at residues 295–317 (QVMNCHLLILETFLMTVLTRMYY). Residues 318–340 (RRKDHKVGYETFSSPDLDLNLKA) are Cytoplasmic-facing. Residue S330 is modified to Phosphoserine.

Belongs to the OST-alpha family. In terms of assembly, interacts with SLC51B. The Ost-alpha/Ost-beta complex is a heterodimer composed of alpha (SLC51A) and beta (SLC51B) subunit. As to expression, widely expressed with a high expression in ileum. Expressed in testis, colon, liver, small intestine, kidney, ovary and adrenal gland; and at low levels in heart, lung, brain, pituitary, thyroid gland, uterus, prostate, mammary gland and fat.

Its subcellular location is the cell membrane. The protein localises to the endoplasmic reticulum membrane. The enzyme catalyses taurocholate(out) = taurocholate(in). It carries out the reaction estrone 3-sulfate(out) = estrone 3-sulfate(in). The catalysed reaction is dehydroepiandrosterone 3-sulfate(out) = dehydroepiandrosterone 3-sulfate(in). It catalyses the reaction tauroursodeoxycholate(out) = tauroursodeoxycholate(in). The enzyme catalyses glycoursodeoxycholate(out) = glycoursodeoxycholate(in). It carries out the reaction glycocholate(out) = glycocholate(in). The catalysed reaction is taurochenodeoxycholate(out) = taurochenodeoxycholate(in). It catalyses the reaction glycochenodeoxycholate(out) = glycochenodeoxycholate(in). The enzyme catalyses taurodeoxycholate(out) = taurodeoxycholate(in). It carries out the reaction glycodeoxycholate(out) = glycodeoxycholate(in). The catalysed reaction is prostaglandin E2(out) = prostaglandin E2(in). Its function is as follows. Essential component of the Ost-alpha/Ost-beta complex, a heterodimer that acts as the intestinal basolateral transporter responsible for bile acid export from enterocytes into portal blood. Efficiently transports the major species of bile acids (taurocholate). Taurine conjugates are transported more efficiently across the basolateral membrane than glycine-conjugated bile acids. Can also transport steroids such as estrone 3-sulfate and dehydroepiandrosterone 3-sulfate, therefore playing a role in the enterohepatic circulation of sterols. Able to transport eicosanoids such as prostaglandin E2. This is Organic solute transporter subunit alpha (SLC51A) from Homo sapiens (Human).